The chain runs to 507 residues: Subtilisin-like protease 1 (507 aa).

A signal peptide spans Met-1–Ala-19. The propeptide occupies Ala-20 to Asn-116. The Inhibitor I9 domain occupies Ser-34 to Ile-113. In terms of domain architecture, Peptidase S8 spans Ser-126–Lys-400. Catalysis depends on charge relay system residues Asp-158 and His-190. Residues Gly-175–Met-198 form a disordered region. Asn-251 is a glycosylation site (N-linked (GlcNAc...) asparagine). A compositionally biased stretch (polar residues) spans Asn-282–Ser-294. The segment at Asn-282–Ser-312 is disordered. Residue Ser-345 is the Charge relay system of the active site. The span at Ser-378–Ile-394 shows a compositional bias: polar residues. Positions Ser-378–Asp-486 are disordered. Pro residues-rich tracts occupy residues Lys-405–Pro-428 and Glu-438–Pro-449. Low complexity predominate over residues Phe-450–Pro-461. Over residues Ala-462–Pro-476 the composition is skewed to pro residues.

The protein belongs to the peptidase S8 family.

The protein resides in the secreted. Functionally, secreted subtilisin-like serine protease with keratinolytic activity that contributes to pathogenicity. This Trichophyton tonsurans (Scalp ringworm fungus) protein is Subtilisin-like protease 1 (SUB1).